Here is a 428-residue protein sequence, read N- to C-terminus: Glutamate-1-semialdehyde 2,1-aminomutase 1 (428 aa).

Lysine 268 carries the N6-(pyridoxal phosphate)lysine modification.

This sequence belongs to the class-III pyridoxal-phosphate-dependent aminotransferase family. HemL subfamily. Homodimer. Requires pyridoxal 5'-phosphate as cofactor.

It localises to the cytoplasm. It carries out the reaction (S)-4-amino-5-oxopentanoate = 5-aminolevulinate. It functions in the pathway porphyrin-containing compound metabolism; protoporphyrin-IX biosynthesis; 5-aminolevulinate from L-glutamyl-tRNA(Glu): step 2/2. This is Glutamate-1-semialdehyde 2,1-aminomutase 1 from Geobacillus kaustophilus (strain HTA426).